We begin with the raw amino-acid sequence, 215 residues long: MNLVGSYAHHHHHHHPHPAHPMLHEPFLFGPASRCHQERPYFQSWLLSPADAAPDFPAGGPPPAAAAAATAYGPDARPGQSPGRLEALGGRLGRRKGSGPKKERRRTESINSAFAELRECIPNVPADTKLSKIKTLRLATSYIAYLMDVLAKDAQSGDPEAFKAELKKADGGRESKRKRELQQHEGFPPALGPVEKRIKGRTGWPQQVWALELNQ.

Disordered regions lie at residues 53-109 (APDF…RTES) and 166-198 (LKKA…EKRI). Residues 65-89 (AAAAATAYGPDARPGQSPGRLEALG) show a composition bias toward low complexity. The segment covering 92–104 (LGRRKGSGPKKER) has biased composition (basic residues). The region spanning 94 to 146 (RRKGSGPKKERRRTESINSAFAELRECIPNVPADTKLSKIKTLRLATSYIAYL) is the bHLH domain. Thr-107 is modified (phosphothreonine; by PLK4). Ser-109 carries the phosphoserine; by PLK4 modification.

In terms of assembly, efficient DNA binding requires dimerization with another bHLH protein. Forms homodimers and heterodimers with TCF3 gene products E12 and E47, HAND2 and HEY1, HEY2 and HEYL (hairy-related transcription factors). Interacts with MDFIC. Interacts with SOX15; the interaction enhances HAND1-induced differentiation of trophoblast giant cells. Post-translationally, phosphorylation by PLK4 disrupts the interaction with MDFIC and leads to translocation into the nucleoplasm, allowing dimerization and transcription factor activity. In terms of tissue distribution, heart.

Its subcellular location is the nucleus. The protein resides in the nucleoplasm. The protein localises to the nucleolus. In terms of biological role, transcription factor that plays an essential role in both trophoblast giant cell differentiation and in cardiac morphogenesis. Binds the DNA sequence 5'-NRTCTG-3' (non-canonical E-box). Acts as a transcriptional repressor of SOX15. In the adult, could be required for ongoing expression of cardiac-specific genes. The polypeptide is Heart- and neural crest derivatives-expressed protein 1 (HAND1) (Homo sapiens (Human)).